Consider the following 77-residue polypeptide: Secapin (77 aa).

Residues 1-32 (MKNYSKNATYLITVLLFSFVAMLLIIPSKCEA) form the signal peptide. Positions 33-52 (VSNDMQPLEARSADLVPEPR) are excised as a propeptide. A disulfide bridge links Cys61 with Cys72.

This sequence belongs to the secapin family. In terms of tissue distribution, expressed by the venom gland.

The protein resides in the secreted. In terms of biological role, nontoxic peptide. This chain is Secapin, found in Vespa magnifica (Hornet).